Consider the following 323-residue polypeptide: Glutamyl-Q tRNA(Asp) synthetase (323 aa).

L-glutamate is bound by residues 5 to 9 (RFAPT) and E41. Residues 8–18 (PTPSGALHLGN) carry the 'HIGH' region motif. Residues C105, C107, Y129, and C133 each coordinate Zn(2+). Y193 and R211 together coordinate L-glutamate. The 'KMSKS' region signature appears at 249–253 (RLAKR). K252 is a binding site for ATP.

It belongs to the class-I aminoacyl-tRNA synthetase family. GluQ subfamily. Requires Zn(2+) as cofactor.

Its function is as follows. Catalyzes the tRNA-independent activation of glutamate in presence of ATP and the subsequent transfer of glutamate onto a tRNA(Asp). Glutamate is transferred on the 2-amino-5-(4,5-dihydroxy-2-cyclopenten-1-yl) moiety of the queuosine in the wobble position of the QUC anticodon. In Symbiobacterium thermophilum (strain DSM 24528 / JCM 14929 / IAM 14863 / T), this protein is Glutamyl-Q tRNA(Asp) synthetase.